A 467-amino-acid chain; its full sequence is Probable serine hydroxymethyltransferase, cytosolic (467 aa).

K243 is subject to N6-(pyridoxal phosphate)lysine.

The protein belongs to the SHMT family. Homotetramer. Pyridoxal 5'-phosphate serves as cofactor.

The protein localises to the cytoplasm. The catalysed reaction is (6R)-5,10-methylene-5,6,7,8-tetrahydrofolate + glycine + H2O = (6S)-5,6,7,8-tetrahydrofolate + L-serine. The protein operates within one-carbon metabolism; tetrahydrofolate interconversion. Functionally, interconversion of serine and glycine. This Schizosaccharomyces pombe (strain 972 / ATCC 24843) (Fission yeast) protein is Probable serine hydroxymethyltransferase, cytosolic.